The sequence spans 368 residues: DNA replication and repair protein RecF (368 aa).

30-37 (GNNAQGKT) is an ATP binding site.

This sequence belongs to the RecF family.

It localises to the cytoplasm. Functionally, the RecF protein is involved in DNA metabolism; it is required for DNA replication and normal SOS inducibility. RecF binds preferentially to single-stranded, linear DNA. It also seems to bind ATP. The protein is DNA replication and repair protein RecF of Streptococcus pyogenes serotype M6 (strain ATCC BAA-946 / MGAS10394).